The sequence spans 2210 residues: Genome polyprotein (2210 aa).

Residues 1–24 (MAPVVSRDQCKPKTPKPHRPAPPH) form a disordered region. The span at 13–22 (KTPKPHRPAP) shows a compositional bias: basic residues. Residues 426–585 (SNKIVELSTM…ADFLRQHPGV (160 aa)) enclose the SF3 helicase domain. 456–463 (GPPGHGKS) provides a ligand contact to ATP. At Tyr-940 the chain carries O-(5'-phospho-RNA)-tyrosine. The Peptidase C24 domain occupies 991–1136 (GNNCDDIPLH…KVITPITPEP (146 aa)). Residues His-1025, Asp-1039, and Cys-1103 each act as for 3CLpro activity in the active site. In terms of domain architecture, RdRp catalytic spans 1379–1501 (DHCLELDYSK…TIPSHLTKSI (123 aa)). Residues 1656-1685 (LIREGNMSDNKSIPEQQHESSRAMDAGATG) are disordered.

In terms of processing, specific enzymatic cleavages by its own cysteine protease yield mature proteins. The protease cleaves itself from the nascent polyprotein autocatalytically. Precursor p41 can be cleaved by viral 3CLpro into protein p19 and VPg, or cleaved by host protease into protein p23/2 and protein p18. VPg is uridylylated by the polymerase and is covalently attached to the 5'-end of the polyadenylated genomic and subgenomic RNAs. This uridylylated form acts as a nucleotide-peptide primer for the polymerase.

Its subcellular location is the virion. The protein resides in the host cytoplasm. The catalysed reaction is a ribonucleoside 5'-triphosphate + H2O = a ribonucleoside 5'-diphosphate + phosphate + H(+). The enzyme catalyses Endopeptidase with a preference for cleavage when the P1 position is occupied by Glu-|-Xaa and the P1' position is occupied by Gly-|-Yaa.. It carries out the reaction RNA(n) + a ribonucleoside 5'-triphosphate = RNA(n+1) + diphosphate. Functionally, displays NTPase activity, but no helicase activity. Induces the formation of convoluted membranes derived from the host ER. These remodeled membranes probably form the viral factories that contain the replication complex. Together with NS2 and NS4, initiates the formation of the replication complex. Its function is as follows. Viral genome-linked protein is covalently linked to the 5'-end of the positive-strand, negative-strand genomic RNAs and subgenomic RNA. Acts as a genome-linked replication primer. May recruit ribosome to viral RNA thereby promoting viral proteins translation. Interacts with host translation initiation complex to allow the translation of viral proteins. Processes the polyprotein. 3CLpro-RdRp is first released by autocleavage, then all other proteins are cleaved. May cleave polyadenylate-binding protein thereby inhibiting cellular translation. In terms of biological role, replicates genomic and antigenomic RNA by recognizing replications specific signals. Also transcribes a subgenomic mRNA by initiating RNA synthesis internally on antigenomic RNA. This sgRNA codes for structural proteins. Catalyzes the covalent attachment VPg with viral RNAs. Functionally, capsid protein self assembles to form an icosahedral capsid with a T=3 symmetry, about 35 nm in diameter, and consisting of 180 capsid proteins. A smaller form of capsid with a diameter of 23 nm might be capsid proteins assembled as icosahedron with T=1 symmetry. The capsid encapsulate VP2 proteins and genomic or subgenomic RNA. Attaches virion to target cells by binding histo-blood group antigens, inducing endocytosis of the viral particle. Acidification of the endosome induces conformational change of capsid protein thereby injecting virus genomic RNA into host cytoplasm. The protein is Genome polyprotein of Bovine enteric calicivirus NB (isolate Bovine/United States/N ebraska/1980) (BEC-NB).